Consider the following 484-residue polypeptide: Acid alpha-amylase (484 aa).

An N-linked (GlcNAc...) asparagine glycan is attached at asparagine 24. An intrachain disulfide couples cysteine 30 to cysteine 38. Substrate is bound at residue tryptophan 83. A Ca(2+)-binding site is contributed by aspartate 121. A substrate-binding site is contributed by histidine 122. Cysteines 150 and 164 form a disulfide. Asparagine 157 carries N-linked (GlcNAc...) asparagine glycosylation. Ca(2+) contacts are provided by glutamate 162 and aspartate 175. A glycan (N-linked (GlcNAc...) asparagine) is linked at asparagine 197. Residue arginine 204 participates in substrate binding. Aspartate 206, glutamate 210, and glutamate 230 together coordinate Ca(2+). Aspartate 206 serves as the catalytic Nucleophile. 209–210 serves as a coordination point for substrate; that stretch reads LE. Residue glutamate 230 is the Proton donor of the active site. Glycine 234 is a binding site for substrate. Cysteine 240 and cysteine 283 are disulfide-bonded. Residues aspartate 297 and arginine 344 each coordinate substrate. A disulfide bond links cysteine 440 and cysteine 475.

It belongs to the glycosyl hydrolase 13 family. In terms of assembly, monomer. The cofactor is Ca(2+).

It localises to the secreted. It carries out the reaction Endohydrolysis of (1-&gt;4)-alpha-D-glucosidic linkages in polysaccharides containing three or more (1-&gt;4)-alpha-linked D-glucose units.. This chain is Acid alpha-amylase, found in Aspergillus niger.